Reading from the N-terminus, the 469-residue chain is tRNA-2-methylthio-N(6)-dimethylallyladenosine synthase (469 aa).

Residues 22–142 enclose the MTTase N-terminal domain; the sequence is RKVFIKTYGC…LPEALRRAQQ (121 aa). [4Fe-4S] cluster is bound by residues C31, C67, C105, C183, C187, and C190. The Radical SAM core domain maps to 169–401; the sequence is RARGVTAFLT…QALLLKQQQE (233 aa). The TRAM domain maps to 404–466; it reads ESCIGKEIDL…TNSLFAERAE (63 aa).

This sequence belongs to the methylthiotransferase family. MiaB subfamily. As to quaternary structure, monomer. It depends on [4Fe-4S] cluster as a cofactor.

The protein localises to the cytoplasm. The catalysed reaction is N(6)-dimethylallyladenosine(37) in tRNA + (sulfur carrier)-SH + AH2 + 2 S-adenosyl-L-methionine = 2-methylsulfanyl-N(6)-dimethylallyladenosine(37) in tRNA + (sulfur carrier)-H + 5'-deoxyadenosine + L-methionine + A + S-adenosyl-L-homocysteine + 2 H(+). In terms of biological role, catalyzes the methylthiolation of N6-(dimethylallyl)adenosine (i(6)A), leading to the formation of 2-methylthio-N6-(dimethylallyl)adenosine (ms(2)i(6)A) at position 37 in tRNAs that read codons beginning with uridine. The protein is tRNA-2-methylthio-N(6)-dimethylallyladenosine synthase of Rhizobium etli (strain CIAT 652).